A 680-amino-acid polypeptide reads, in one-letter code: WD repeat-containing protein 48 homolog (680 aa).

WD repeat units lie at residues 26–65, 71–110, 113–152, 164–203, 206–245, 248–287, 290–329, and 350–389; these read QHRNGVNALQLDANNGKLYSAGRDAIIRVWNTRTDSSEKY, HHNDWVNDIVLCCNGRNLISASCDTTVKVWNAQKGFCMST, THRDYVQALAYAKDREQVASAGLDKAIFLWDVNTLTALTA, GSKDSIYSLAMNPSGTVIVSGSTENILRIWDPRTCMRSMK, GHTENVRCLVVSPDGNQVVSGSSDGTIKVWNLGQQRCVQT, VHKEGVWSLLMSENFQYIISGSRDRNIIVTEMRNPSNKTL, EEQAPVLSLGYNIDKTGVWATTWNSDIRCWKLPMYDRCTM, and KGGAAIKECAVLNDKRYIITKDSQDQVVVYDVLRVVKKEQ. The disordered stretch occupies residues 592 to 616; sequence ETTPSGGNANNSLQNSQSDANSEGS.

Belongs to the WD repeat WDR48 family. In terms of assembly, catalytic component of the Usp12-46 deubiquitylase complex consisting of Usp12-46, Wdr20 and Uaf1; regulatory subunit that, together wtih Wdr20, stabilizes Usp12-46. The Usp12-46 deubiquitylase complex associates with arr/arrow; the interaction leads to deubiquitination and stabilization of arr/arrow.

Regulatory component of the Usp12-46 deubiquitylase complex. activates deubiquitination by increasing the catalytic turnover without increasing the affinity of deubiquitinating enzymes for the substrate. The complex deubiquitylates the wg/wingless-signaling receptor arr/arrow, which stabilizes the receptor and increases its concentration at the cell surface; this enhances the sensitivity of cells to wg/wingless-signal stimulation. This increases the amplitude and spatial range of the signaling response to the wg/wingless morphogen gradient, facilitating the precise concentration-dependent regulation of its target genes. Together with Wdr20 and Usp12-46 required for wg/wingless-mediated signaling in the wing imaginal disc and for wg/wingless-dependent regulation of intestinal stem cell proliferation. The sequence is that of WD repeat-containing protein 48 homolog from Drosophila erecta (Fruit fly).